Reading from the N-terminus, the 354-residue chain is C-C chemokine receptor type 5 (354 aa).

The Extracellular portion of the chain corresponds to 1–32 (MDFQGSIPTYIYDIDYSMSAPCQKVNVKQIAA). Residue serine 6 is glycosylated (O-linked (GalNAc...) serine). Residues tyrosine 10 and tyrosine 16 each carry the sulfotyrosine modification. Cystine bridges form between cysteine 22–cysteine 271 and cysteine 103–cysteine 180. The chain crosses the membrane as a helical span at residues 33-60 (QLLPPLYSLVFIFGFVGNMMVFLILISC). Over 61-70 (KKLKSMTDIY) the chain is Cytoplasmic. A helical membrane pass occupies residues 71-91 (LFNLAISDLLFLLTLPFWAHY). At 92–104 (AANEWVFGNIMCK) the chain is on the extracellular side. A helical transmembrane segment spans residues 105 to 126 (LFTGIYHIGYFGGIFFIILLTI). Over 127-143 (DRYLAIVHAVFAIKART) the chain is Cytoplasmic. A helical transmembrane segment spans residues 144–168 (VNFGVITSVVTWVVAVFVSLPEIIF). The Extracellular portion of the chain corresponds to 169 to 200 (MRSQKEGSHYTCSPHFLHIQYRFWKHFQTLKM). A helical membrane pass occupies residues 201–220 (VILSLILPLLVMVICYSGIL). The Cytoplasmic portion of the chain corresponds to 221-237 (NTLFRCRNEKKRHRAVR). The chain crosses the membrane as a helical span at residues 238–262 (LIFAIMIVYFLFWTPYNIVLLLTTF). The Extracellular portion of the chain corresponds to 263–279 (QEYFGLNNCSSSNRLDQ). A helical membrane pass occupies residues 280-303 (AMQVTETLGMTHCCLNPVIYAFVG). At 304–354 (EKFRNYLSVFFRKHIVKRFCKHCSIFQQVNPDRVSSVYTRSTGEQEVSTGL) the chain is on the cytoplasmic side. Residues cysteine 323 and cysteine 326 are each lipidated (S-palmitoyl cysteine). 4 positions are modified to phosphoserine; by BARK1: serine 338, serine 339, serine 344, and serine 351.

This sequence belongs to the G-protein coupled receptor 1 family. In terms of assembly, interacts with PRAF2. Efficient ligand binding to CCL3/MIP-1alpha and CCL4/MIP-1beta requires sulfation, O-glycosylation and sialic acid modifications. Glycosylation on Ser-6 is required for efficient binding of CCL4. Interacts with GRK2. Interacts with ARRB1 and ARRB2. Interacts with CNIH4. Interacts with S100A4; this interaction stimulates T-lymphocyte chemotaxis. Sulfated on at least 2 of the N-terminal tyrosines. Sulfation is required for efficient binding of the chemokines, CCL3 and CCL4. In terms of processing, O-glycosylated, but not N-glycosylated. Ser-6 appears to be the major site. Also sialylated glycans present which contribute to chemokine binding. Ser-17 may also be glycosylated and, if so, with small moieties such as a T-antigen. Post-translationally, palmitoylation in the C-terminal is important for cell surface expression. Phosphorylation on serine residues in the C-terminal is stimulated by binding CC chemokines especially by APO-RANTES.

It is found in the cell membrane. Receptor for a number of inflammatory CC-chemokines including CCL3/MIP-1-alpha, CCL4/MIP-1-beta and RANTES and subsequently transduces a signal by increasing the intracellular calcium ion level. May play a role in the control of granulocytic lineage proliferation or differentiation. Participates in T-lymphocyte migration to the infection site by acting as a chemotactic receptor. The polypeptide is C-C chemokine receptor type 5 (Ccr5) (Rattus norvegicus (Rat)).